A 271-amino-acid polypeptide reads, in one-letter code: MAAGGRMEDGSLDITQSIEDDPLLDAQLLPHHSLQAHFRPRFHPLPTVIIVNLLWFIHLVFVVLAFLTGVLCSYPNPNEDKCPGNYTNPLKVQTVIILGKVILWILHLLLECYIQYHHSKIRNRGYNLIYRSTRHLKRLALMIQSSGNTVLLLILCMQHSFPEPGRLYLDLILAILALELICSLICLLIYTVKIRRFNKAKPEPDILEEEKIYAYPSNITSETGFRTISSLEEIVEKQGDTIEYLKRHNALLSKRLLALTSSDLGCQPSRT.

Residues 1-46 (MAAGGRMEDGSLDITQSIEDDPLLDAQLLPHHSLQAHFRPRFHPLP) are Cytoplasmic-facing. The residue at position 15 (T15) is a Phosphothreonine. At S17 the chain carries Phosphoserine. A helical transmembrane segment spans residues 47 to 67 (TVIIVNLLWFIHLVFVVLAFL). The Lumenal portion of the chain corresponds to 68-93 (TGVLCSYPNPNEDKCPGNYTNPLKVQ). Residues 94–114 (TVIILGKVILWILHLLLECYI) traverse the membrane as a helical segment. Topologically, residues 115 to 138 (QYHHSKIRNRGYNLIYRSTRHLKR) are cytoplasmic. Residues 139-159 (LALMIQSSGNTVLLLILCMQH) traverse the membrane as a helical segment. The Lumenal segment spans residues 160–171 (SFPEPGRLYLDL). A helical membrane pass occupies residues 172–192 (ILAILALELICSLICLLIYTV). Residues 193–271 (KIRRFNKAKP…SDLGCQPSRT (79 aa)) are Cytoplasmic-facing. Residue Y213 is modified to Phosphotyrosine. Phosphoserine occurs at positions 229, 230, and 269.

The protein belongs to the TMEM192 family. As to quaternary structure, homodimer. In terms of processing, not N-glycosylated. As to expression, strongly expressed in kidney, liver, lung and pancreas.

It is found in the lysosome membrane. The protein resides in the late endosome. This is Transmembrane protein 192 (TMEM192) from Homo sapiens (Human).